Reading from the N-terminus, the 246-residue chain is Pyridoxine 5'-phosphate synthase (246 aa).

Asn-12 is a 3-amino-2-oxopropyl phosphate binding site. 14 to 15 (DH) lines the 1-deoxy-D-xylulose 5-phosphate pocket. Arg-23 contacts 3-amino-2-oxopropyl phosphate. His-48 serves as the catalytic Proton acceptor. 1-deoxy-D-xylulose 5-phosphate is bound by residues Arg-50 and His-55. Glu-75 (proton acceptor) is an active-site residue. Residue Thr-105 coordinates 1-deoxy-D-xylulose 5-phosphate. Residue His-196 is the Proton donor of the active site. 3-amino-2-oxopropyl phosphate contacts are provided by residues Gly-197 and 218 to 219 (GH).

This sequence belongs to the PNP synthase family. In terms of assembly, homooctamer; tetramer of dimers.

The protein resides in the cytoplasm. The enzyme catalyses 3-amino-2-oxopropyl phosphate + 1-deoxy-D-xylulose 5-phosphate = pyridoxine 5'-phosphate + phosphate + 2 H2O + H(+). It participates in cofactor biosynthesis; pyridoxine 5'-phosphate biosynthesis; pyridoxine 5'-phosphate from D-erythrose 4-phosphate: step 5/5. In terms of biological role, catalyzes the complicated ring closure reaction between the two acyclic compounds 1-deoxy-D-xylulose-5-phosphate (DXP) and 3-amino-2-oxopropyl phosphate (1-amino-acetone-3-phosphate or AAP) to form pyridoxine 5'-phosphate (PNP) and inorganic phosphate. The protein is Pyridoxine 5'-phosphate synthase of Pseudomonas putida (strain GB-1).